The primary structure comprises 1350 residues: 1-phosphatidylinositol 4,5-bisphosphate phosphodiesterase gamma plc-3 (1350 aa).

Positions 1–40 are disordered; the sequence is MQHGSLGPSSSSRKTTVTSTAGSVHLHHRSSNGFSTASRA. Positions 9 to 20 are enriched in low complexity; that stretch reads SSSSRKTTVTST. A compositionally biased stretch (polar residues) spans 31–40; it reads SNGFSTASRA. Residues 352–503 form the PI-PLC X-box domain; sequence HDMSRPLSHY…LKKKIIVKHK (152 aa). Residues histidine 367 and histidine 419 contribute to the active site. The disordered stretch occupies residues 570–594; that stretch reads NPNDDTVSVSGDEEREEETPSGFGV. 2 consecutive SH2 domains span residues 605-704 and 715-804; these read WFHG…TIPC and WFSA…RFPV. An SH3 domain is found at 832 to 890; the sequence is DKEVQARALRPYRGTADDELSFPANVIITVLRKEEGLWRGRYGSLTGWFPSAHVQEILP. In terms of domain architecture, PH spans 855-960; sequence ANVIITVLRK…WQNNLFELTR (106 aa). Positions 982–1092 constitute a PI-PLC Y-box domain; that stretch reads LSNLVVYCQA…CGYLLKPDYM (111 aa). Residues 1099–1220 form the C2 domain; it reads PTNTEKFATA…CGFRSVPLKN (122 aa). Positions 1270–1350 are disordered; it reads GDSIPREMAP…KFSFGKSSKS (81 aa). Polar residues predominate over residues 1283–1329; that stretch reads TSATDRSLDSPTNSESRATLLSGQRGSQDSMDSAAETSSIASGTISS. Positions 1340–1350 are enriched in low complexity; that stretch reads KKFSFGKSSKS.

It depends on Ca(2+) as a cofactor. As to expression, expressed in intestine, isthmus of the pharynx, proximal gonad sheath cells, spermatheca and uterine sheath cells. In males, expressed in the valve cell, the vas deferens and retractor and ventral protactor muscles.

It carries out the reaction a 1,2-diacyl-sn-glycero-3-phospho-(1D-myo-inositol-4,5-bisphosphate) + H2O = 1D-myo-inositol 1,4,5-trisphosphate + a 1,2-diacyl-sn-glycerol + H(+). Mediates the production of the second messenger molecules diacylglycerol (DAG) and inositol 1,4,5-trisphosphate (IP3) which plays an important role in the regulation of intracellular signaling cascades. Regulates basal and ovulatory sheath cell contractions by controlling Ca(2+) oscillations via IP3-mediated activation of IP3 receptor itr-1. In intestinal epithelial cells, regulates Ca(2+) oscillations which control posterior body wall muscle contractions required for defecation by IP3-mediated activation of itr-1 and probably by activating TRPM channels gon-2 and gtl-1 by reducing PIP2 levels. By activating tpa-1 via DAG production, required for the expression of antimicrobial peptide nlp-29 in the epidermis in response to fungal infection or physical injury. By triggering Ca(2+) transient via IP3-mediated activation of IPR3 receptor itr-1 in ASH sensory neurons, involved in avoidance behavior in response to nose touch. Probably by regulating neuronal transmission in ALA neurons, mediates the decrease in pharyngeal pumping and locomotion during the quiescent state that precedes each larval molt, downstream of lin-3 and receptor let-23 and upstream of tpa-1 but not itr-1. During embryogenesis, may play an role in epidermal morphogenesis together with plc-1. Probably downstream of receptor daf-2, regulates male-sex muscle excitability in the absence of food. This Caenorhabditis elegans protein is 1-phosphatidylinositol 4,5-bisphosphate phosphodiesterase gamma plc-3.